Reading from the N-terminus, the 89-residue chain is Small ribosomal subunit protein uS15 (89 aa).

It belongs to the universal ribosomal protein uS15 family. Part of the 30S ribosomal subunit. Forms a bridge to the 50S subunit in the 70S ribosome, contacting the 23S rRNA.

One of the primary rRNA binding proteins, it binds directly to 16S rRNA where it helps nucleate assembly of the platform of the 30S subunit by binding and bridging several RNA helices of the 16S rRNA. Its function is as follows. Forms an intersubunit bridge (bridge B4) with the 23S rRNA of the 50S subunit in the ribosome. In Lacticaseibacillus casei (strain BL23) (Lactobacillus casei), this protein is Small ribosomal subunit protein uS15.